The sequence spans 132 residues: Small ribosomal subunit protein uS8 (132 aa).

It belongs to the universal ribosomal protein uS8 family. Part of the 30S ribosomal subunit. Contacts proteins S5 and S12.

Its function is as follows. One of the primary rRNA binding proteins, it binds directly to 16S rRNA central domain where it helps coordinate assembly of the platform of the 30S subunit. The sequence is that of Small ribosomal subunit protein uS8 from Paracoccus denitrificans (strain Pd 1222).